Here is a 142-residue protein sequence, read N- to C-terminus: Relaxin-3 (142 aa).

The signal sequence occupies residues 1 to 25; it reads MARYMLLLLLAVWVLTGELWPGAEA. Cystine bridges form between Cys35-Cys129, Cys47-Cys142, and Cys128-Cys133. Residues 55 to 118 constitute a propeptide, connecting peptide; sequence SDILAHEAMG…GTPGVLRGSR (64 aa).

This sequence belongs to the insulin family. Heterodimer of a B chain and an A chain linked by two disulfide bonds.

The protein resides in the secreted. In terms of biological role, may play a role in neuropeptide signaling processes. Ligand for LGR7, RXFP3 and RXFP4. The polypeptide is Relaxin-3 (RLN3) (Homo sapiens (Human)).